The primary structure comprises 450 residues: UDP-N-acetylmuramoylalanine--D-glutamate ligase (450 aa).

115–121 provides a ligand contact to ATP; that stretch reads GTNGKTT.

Belongs to the MurCDEF family.

It localises to the cytoplasm. It catalyses the reaction UDP-N-acetyl-alpha-D-muramoyl-L-alanine + D-glutamate + ATP = UDP-N-acetyl-alpha-D-muramoyl-L-alanyl-D-glutamate + ADP + phosphate + H(+). It functions in the pathway cell wall biogenesis; peptidoglycan biosynthesis. In terms of biological role, cell wall formation. Catalyzes the addition of glutamate to the nucleotide precursor UDP-N-acetylmuramoyl-L-alanine (UMA). This is UDP-N-acetylmuramoylalanine--D-glutamate ligase from Desulfatibacillum aliphaticivorans.